The following is a 146-amino-acid chain: MNRGALIKLVESRYVRTDLPEFRPGDTVRVSYKVKEGNRTRIQDFEGIVIRIRRNGFNTTFTVRKVSYGVGVERIFPLHSPLIQKIDIVQRGRARRAKLYFIRNLSDREIRRKLRADRKRIDQDRAAERAAKEEAQKAQEPKASQE.

The segment at 116–146 is disordered; that stretch reads ADRKRIDQDRAAERAAKEEAQKAQEPKASQE. Residues 119-146 are compositionally biased toward basic and acidic residues; it reads KRIDQDRAAERAAKEEAQKAQEPKASQE.

In terms of assembly, part of the 50S risobomal subunit. Contacts protein L14. Forms a bridge to the 30S subunit in the 70S ribosome, contacting the 16S rRNA.

Functionally, contacts the 16S rRNA of the 30S subunit (part of bridge B6), connecting the 2 subunits. The polypeptide is Large ribosomal subunit protein bL19 (rplS) (Thermus thermophilus (strain ATCC 27634 / DSM 579 / HB8)).